The sequence spans 175 residues: MTTIITVRKGGKVVMAGDGQVSLGQTVMKGNARKVRRIGKGEVVAGFAGATADAFTLLERLEKKLEQYPGQLMRAAVELAKDWRTDKYLRNLEAMMLVADKSITLAITGNGDVLEPEHGTTAIGSGGNFALAAALALMDTDKSAEEIARRALDIAADICVYTNHNVVVELLDAEG.

Thr2 is an active-site residue. Residues Ala156, Cys159, and Thr162 each contribute to the Na(+) site.

The protein belongs to the peptidase T1B family. HslV subfamily. In terms of assembly, a double ring-shaped homohexamer of HslV is capped on each side by a ring-shaped HslU homohexamer. The assembly of the HslU/HslV complex is dependent on binding of ATP.

The protein resides in the cytoplasm. The catalysed reaction is ATP-dependent cleavage of peptide bonds with broad specificity.. Its activity is regulated as follows. Allosterically activated by HslU binding. In terms of biological role, protease subunit of a proteasome-like degradation complex believed to be a general protein degrading machinery. This is ATP-dependent protease subunit HslV from Rhizobium johnstonii (strain DSM 114642 / LMG 32736 / 3841) (Rhizobium leguminosarum bv. viciae).